Consider the following 230-residue polypeptide: Type II restriction enzyme SinI (230 aa).

It carries out the reaction Endonucleolytic cleavage of DNA to give specific double-stranded fragments with terminal 5'-phosphates.. Its function is as follows. A P subtype restriction enzyme that recognizes the double-stranded sequence 5'-GGWCC-3' and cleaves after G-1. In Salmonella infantis, this protein is Type II restriction enzyme SinI (sinIR).